A 194-amino-acid chain; its full sequence is Adenylate kinase isoenzyme 1 (194 aa).

N-acetylmethionine is present on Met-1. Gly-18 to Thr-23 is a binding site for ATP. Residue Ser-38 is modified to Phosphoserine. Residues Ser-38–Val-67 form an NMP region. Residues Thr-39, Arg-44, Gln-65–Val-67, Gly-94–Arg-97, and Gln-101 each bind AMP. The interval Lys-131–Asp-141 is LID. Arg-132 serves as a coordination point for ATP. Arg-138 and Arg-149 together coordinate AMP. Gly-177 is an ATP binding site.

It belongs to the adenylate kinase family. AK1 subfamily. As to quaternary structure, monomer. Mg(2+) serves as cofactor.

It localises to the cytoplasm. The enzyme catalyses a ribonucleoside 5'-phosphate + ATP = a ribonucleoside 5'-diphosphate + ADP. It catalyses the reaction AMP + ATP = 2 ADP. The catalysed reaction is dAMP + ATP = dADP + ADP. It carries out the reaction dATP + AMP = dADP + ADP. The enzyme catalyses dAMP + dATP = 2 dADP. It catalyses the reaction a 2'-deoxyribonucleoside 5'-diphosphate + ATP = a 2'-deoxyribonucleoside 5'-triphosphate + ADP. The catalysed reaction is a ribonucleoside 5'-diphosphate + ATP = a ribonucleoside 5'-triphosphate + ADP. It carries out the reaction CDP + GTP = CTP + GDP. The enzyme catalyses GDP + ATP = GTP + ADP. It catalyses the reaction UDP + ATP = UTP + ADP. The catalysed reaction is GTP + UDP = UTP + GDP. It carries out the reaction dTDP + GTP = dTTP + GDP. The enzyme catalyses dCDP + GTP = dCTP + GDP. It catalyses the reaction dGDP + ATP = dGTP + ADP. The catalysed reaction is dADP + GTP = dATP + GDP. It carries out the reaction thiamine diphosphate + ADP = thiamine triphosphate + AMP. In terms of biological role, catalyzes the reversible transfer of the terminal phosphate group between ATP and AMP. Also displays broad nucleoside diphosphate kinase activity. Plays an important role in cellular energy homeostasis and in adenine nucleotide metabolism. Also catalyzes at a very low rate the synthesis of thiamine triphosphate (ThTP) from thiamine diphosphate (ThDP) and ADP. The chain is Adenylate kinase isoenzyme 1 from Sus scrofa (Pig).